A 142-amino-acid chain; its full sequence is Galactose-binding lectin (142 aa).

Residues 1 to 141 enclose the Galectin domain; it reads TYAEVESFGV…GTDIWDLLLL (141 aa).

Homotetramer.

Cytotoxic activity against L.infantum promastigotes is completely inhibited by D-galactose. Inhibition activity against biofilm formation by S.aureus and S.epidermidis is inhibited by alpha-lactose. Hemagglutination activity is inhibited by alpha-lactose (MIC=100 mM), beta-lactose (MIC=100 mM), lactulose (MIC=100 mM), bovine submaxillary mucin (BSM) (MIC=32 ug/ml), fetuin (MIC=16 ug/ml), porcine stomach mucin (PSM) type 2 (MIC=8 ug/ml) and PSM type 3 (MIC=8 ug/ml). Functionally, galactose-binding lectin. Displays antibacterial and hemagglutinin activity. Inhibits the growth of L.infantum promastigotes by damaging their membrane integrity and inducing cell apoptosis via the production of reactive oxygen species (ROS). Inhibition of L.infantum promastigotes appears to increase with time (MIC=1.2 uM/ml after 24 hours, MIC=0.9 uM/ml after 48 hours and MIC=0.6 uM/ml after 72 hours). Agglutinates Gram-negative and Gram-positive bacteria including E.coli, S.aureus and S.epidermidis, and inhibits biofilm formation by S.aureus and S.epidermidis. Displays hemagglutination activity towards all types of human erythrocytes (O, A and B) and rabbit erythrocytes. This chain is Galactose-binding lectin, found in Chondrilla caribensis (Chicken liver sponge).